The primary structure comprises 184 residues: Large ribosomal subunit protein uL5 (184 aa).

This sequence belongs to the universal ribosomal protein uL5 family. As to quaternary structure, part of the 50S ribosomal subunit; part of the 5S rRNA/L5/L18/L25 subcomplex. Contacts the 5S rRNA and the P site tRNA. Forms a bridge to the 30S subunit in the 70S ribosome.

Functionally, this is one of the proteins that bind and probably mediate the attachment of the 5S RNA into the large ribosomal subunit, where it forms part of the central protuberance. In the 70S ribosome it contacts protein S13 of the 30S subunit (bridge B1b), connecting the 2 subunits; this bridge is implicated in subunit movement. Contacts the P site tRNA; the 5S rRNA and some of its associated proteins might help stabilize positioning of ribosome-bound tRNAs. The polypeptide is Large ribosomal subunit protein uL5 (Ureaplasma parvum serovar 3 (strain ATCC 27815 / 27 / NCTC 11736)).